The chain runs to 846 residues: Neurotactin (846 aa).

The disordered stretch occupies residues 1-222; that stretch reads MGELEEKETP…EDASDAPPKR (222 aa). Residues 1 to 324 lie on the Cytoplasmic side of the membrane; it reads MGELEEKETP…LRGYKCSVDD (324 aa). Low complexity predominate over residues 11-20; it reads PTETTAAQQE. Residues 23–42 are compositionally biased toward basic and acidic residues; the sequence is EEPKETDKMLDKKEDAKEKT. At T28 the chain carries Phosphothreonine; by PKC. T42 bears the Phosphothreonine mark. Phosphoserine is present on S44. A Phosphothreonine modification is found at T47. Phosphoserine occurs at positions 48 and 52. A compositionally biased stretch (basic and acidic residues) spans 63–74; it reads AEKKIDDAELAK. At S75 the chain carries Phosphoserine; by PKC. S77 carries the phosphoserine modification. 4 stretches are compositionally biased toward basic and acidic residues: residues 95–111, 141–155, 163–178, and 185–205; these read DSAD…EVKP, LLEK…KEAN, GKDE…ERLR, and PSAE…KSEA. S103 carries the post-translational modification Phosphoserine; by PKC. Position 169 is a phosphoserine; by PKC (S169). A phosphoserine mark is found at S186 and S203. Position 206 is a phosphothreonine (T206). Residue S256 is modified to Phosphoserine. T259 bears the Phosphothreonine mark. Position 263 is a phosphoserine (S263). T269 bears the Phosphothreonine mark. The chain crosses the membrane as a helical; Signal-anchor for type II membrane protein span at residues 325 to 346; it reads ALIVFGILLFVLLLGVIGYVLT. At 347 to 846 the chain is on the extracellular side; sequence HETLTSPPLR…DIVPRYARVD (500 aa). Residues N410, N417, and N428 are each glycosylated (N-linked (GlcNAc...) asparagine). Cystine bridges form between C422–C437 and C600–C605. N636, N691, and N720 each carry an N-linked (GlcNAc...) asparagine glycan. The cysteines at positions 738 and 830 are disulfide-linked.

It in the C-terminal section; belongs to the type-B carboxylesterase/lipase family. Late in embryogenesis, expression is restricted to cells of the peripheral and central nervous system undergoing proliferation and differentiation. Also expressed in larval CNS, mesoderm and imaginal disks.

Its subcellular location is the membrane. Functionally, may mediate or modulate cell adhesion between embryonic cells during development. In Drosophila melanogaster (Fruit fly), this protein is Neurotactin (Nrt).